A 434-amino-acid chain; its full sequence is Histidinol dehydrogenase (434 aa).

Residues Tyr-130, Gln-191, and Asn-214 each contribute to the NAD(+) site. Substrate-binding residues include Ser-237, Gln-259, and His-262. Zn(2+) is bound by residues Gln-259 and His-262. Active-site proton acceptor residues include Glu-327 and His-328. Positions 328, 361, 415, and 420 each coordinate substrate. Asp-361 contributes to the Zn(2+) binding site. His-420 is a binding site for Zn(2+).

It belongs to the histidinol dehydrogenase family. The cofactor is Zn(2+).

The enzyme catalyses L-histidinol + 2 NAD(+) + H2O = L-histidine + 2 NADH + 3 H(+). It participates in amino-acid biosynthesis; L-histidine biosynthesis; L-histidine from 5-phospho-alpha-D-ribose 1-diphosphate: step 9/9. Catalyzes the sequential NAD-dependent oxidations of L-histidinol to L-histidinaldehyde and then to L-histidine. In Chromobacterium violaceum (strain ATCC 12472 / DSM 30191 / JCM 1249 / CCUG 213 / NBRC 12614 / NCIMB 9131 / NCTC 9757 / MK), this protein is Histidinol dehydrogenase.